The sequence spans 315 residues: Porphobilinogen deaminase (315 aa).

The residue at position 251 (Cys251) is an S-(dipyrrolylmethanemethyl)cysteine.

Belongs to the HMBS family. As to quaternary structure, monomer. Requires dipyrromethane as cofactor.

It carries out the reaction 4 porphobilinogen + H2O = hydroxymethylbilane + 4 NH4(+). It functions in the pathway porphyrin-containing compound metabolism; protoporphyrin-IX biosynthesis; coproporphyrinogen-III from 5-aminolevulinate: step 2/4. Functionally, tetrapolymerization of the monopyrrole PBG into the hydroxymethylbilane pre-uroporphyrinogen in several discrete steps. This is Porphobilinogen deaminase from Sphingopyxis alaskensis (strain DSM 13593 / LMG 18877 / RB2256) (Sphingomonas alaskensis).